Consider the following 260-residue polypeptide: Membrane protein insertase YidC 1 (260 aa).

Positions 1–22 (MLKSYRAVLVSLSLLLVFVLSG) are cleaved as a signal peptide. Residue Cys-23 is the site of N-palmitoyl cysteine attachment. A lipid anchor (S-diacylglycerol cysteine) is attached at Cys-23. 5 helical membrane-spanning segments follow: residues 29-49 (IDAH…SFMI), 52-72 (VAHH…TLVI), 133-153 (LAGC…YYAI), 164-184 (FLWV…IAAL), and 213-233 (MPAM…LYWI).

The protein belongs to the OXA1/ALB3/YidC family. Type 2 subfamily.

The protein localises to the cell membrane. In terms of biological role, required for the insertion and/or proper folding and/or complex formation of integral membrane proteins into the membrane. Involved in integration of membrane proteins that insert both dependently and independently of the Sec translocase complex, as well as at least some lipoproteins. The polypeptide is Membrane protein insertase YidC 1 (Bacillus anthracis).